A 1490-amino-acid polypeptide reads, in one-letter code: DNA-directed RNA polymerase subunit beta' (1490 aa).

4 residues coordinate Zn(2+): Cys-67, Cys-69, Cys-82, and Cys-85. Positions 499, 501, and 503 each coordinate Mg(2+). 4 residues coordinate Zn(2+): Cys-868, Cys-944, Cys-951, and Cys-954.

This sequence belongs to the RNA polymerase beta' chain family. The RNAP catalytic core consists of 2 alpha, 1 beta, 1 beta' and 1 omega subunit. When a sigma factor is associated with the core the holoenzyme is formed, which can initiate transcription. It depends on Mg(2+) as a cofactor. Requires Zn(2+) as cofactor.

It carries out the reaction RNA(n) + a ribonucleoside 5'-triphosphate = RNA(n+1) + diphosphate. DNA-dependent RNA polymerase catalyzes the transcription of DNA into RNA using the four ribonucleoside triphosphates as substrates. The sequence is that of DNA-directed RNA polymerase subunit beta' from Chlorobaculum tepidum (strain ATCC 49652 / DSM 12025 / NBRC 103806 / TLS) (Chlorobium tepidum).